The chain runs to 153 residues: SsrA-binding protein (153 aa).

This sequence belongs to the SmpB family.

Its subcellular location is the cytoplasm. Its function is as follows. Required for rescue of stalled ribosomes mediated by trans-translation. Binds to transfer-messenger RNA (tmRNA), required for stable association of tmRNA with ribosomes. tmRNA and SmpB together mimic tRNA shape, replacing the anticodon stem-loop with SmpB. tmRNA is encoded by the ssrA gene; the 2 termini fold to resemble tRNA(Ala) and it encodes a 'tag peptide', a short internal open reading frame. During trans-translation Ala-aminoacylated tmRNA acts like a tRNA, entering the A-site of stalled ribosomes, displacing the stalled mRNA. The ribosome then switches to translate the ORF on the tmRNA; the nascent peptide is terminated with the 'tag peptide' encoded by the tmRNA and targeted for degradation. The ribosome is freed to recommence translation, which seems to be the essential function of trans-translation. The protein is SsrA-binding protein of Sulfurovum sp. (strain NBC37-1).